The primary structure comprises 475 residues: Probable sensor histidine kinase TcrY (475 aa).

Topologically, residues 1–153 (MGITAATEMA…NVDATMLQML (153 aa)) are extracellular. Residues 154 to 174 (IIFGIVTVIALVAATTAGIVI) form a helical membrane-spanning segment. The Cytoplasmic segment spans residues 175–475 (IKRALAPLRR…GWQPLESSPR (301 aa)). The 63-residue stretch at 176-238 (KRALAPLRRV…MLDHIAAALS (63 aa)) folds into the HAMP domain. Positions 253–466 (DASHELRTPL…EFAVRLPLDG (214 aa)) constitute a Histidine kinase domain. Histidine 256 is modified (phosphohistidine; by autocatalysis).

Homodimer. A divalent metal cation is required as a cofactor. Autophosphorylated.

The protein localises to the cell membrane. The catalysed reaction is ATP + protein L-histidine = ADP + protein N-phospho-L-histidine.. Its function is as follows. Member of the two-component regulatory system TcrY/TcrX. Activates TcrX by phosphorylation. The chain is Probable sensor histidine kinase TcrY (tcrY) from Mycobacterium tuberculosis (strain ATCC 25618 / H37Rv).